The primary structure comprises 129 residues: D-ribose pyranase 1 (129 aa).

The active-site Proton donor is His-20. Residues Asp-28, His-96, and 118 to 120 (YSN) contribute to the substrate site.

It belongs to the RbsD / FucU family. RbsD subfamily. In terms of assembly, homodecamer.

Its subcellular location is the cytoplasm. It carries out the reaction beta-D-ribopyranose = beta-D-ribofuranose. The protein operates within carbohydrate metabolism; D-ribose degradation; D-ribose 5-phosphate from beta-D-ribopyranose: step 1/2. Functionally, catalyzes the interconversion of beta-pyran and beta-furan forms of D-ribose. The polypeptide is D-ribose pyranase 1 (Rubrobacter xylanophilus (strain DSM 9941 / JCM 11954 / NBRC 16129 / PRD-1)).